A 214-amino-acid chain; its full sequence is Probable transaldolase (214 aa).

Lysine 83 acts as the Schiff-base intermediate with substrate in catalysis.

Belongs to the transaldolase family. Type 3B subfamily.

The protein localises to the cytoplasm. It carries out the reaction D-sedoheptulose 7-phosphate + D-glyceraldehyde 3-phosphate = D-erythrose 4-phosphate + beta-D-fructose 6-phosphate. Its pathway is carbohydrate degradation; pentose phosphate pathway; D-glyceraldehyde 3-phosphate and beta-D-fructose 6-phosphate from D-ribose 5-phosphate and D-xylulose 5-phosphate (non-oxidative stage): step 2/3. In terms of biological role, transaldolase is important for the balance of metabolites in the pentose-phosphate pathway. This Carboxydothermus hydrogenoformans (strain ATCC BAA-161 / DSM 6008 / Z-2901) protein is Probable transaldolase.